Here is a 518-residue protein sequence, read N- to C-terminus: Probable cyclic di-GMP phosphodiesterase PdeN (518 aa).

The next 2 membrane-spanning stretches (helical) occupy residues 16–36 (CIVA…LVAW) and 236–256 (VWYA…LCYY). The region spanning 261-514 (RMRPGREIMT…DFVRWLKKPY (254 aa)) is the EAL domain.

The protein resides in the cell inner membrane. It carries out the reaction 3',3'-c-di-GMP + H2O = 5'-phosphoguanylyl(3'-&gt;5')guanosine + H(+). Functionally, phosphodiesterase (PDE) that catalyzes the hydrolysis of cyclic-di-GMP (c-di-GMP) to 5'-pGpG. The chain is Probable cyclic di-GMP phosphodiesterase PdeN from Escherichia coli (strain K12).